Reading from the N-terminus, the 448-residue chain is Phosphoglucosamine mutase (448 aa).

The active-site Phosphoserine intermediate is Ser99. Positions 99, 239, 241, and 243 each coordinate Mg(2+). Ser99 carries the phosphoserine modification.

Belongs to the phosphohexose mutase family. Requires Mg(2+) as cofactor. In terms of processing, activated by phosphorylation.

The catalysed reaction is alpha-D-glucosamine 1-phosphate = D-glucosamine 6-phosphate. Catalyzes the conversion of glucosamine-6-phosphate to glucosamine-1-phosphate. This is Phosphoglucosamine mutase from Lachnoclostridium phytofermentans (strain ATCC 700394 / DSM 18823 / ISDg) (Clostridium phytofermentans).